Reading from the N-terminus, the 407-residue chain is Argininosuccinate synthase (407 aa).

Residues 13–21 (AYSGGLDTS) and Ala40 contribute to the ATP site. The L-citrulline site is built by Tyr91 and Ser96. Gly121 is a binding site for ATP. 3 residues coordinate L-aspartate: Thr123, Asn127, and Asp128. Asn127 contributes to the L-citrulline binding site. 5 residues coordinate L-citrulline: Arg131, Ser182, Ser191, Glu267, and Tyr279.

The protein belongs to the argininosuccinate synthase family. Type 1 subfamily. In terms of assembly, homotetramer.

The protein resides in the cytoplasm. The catalysed reaction is L-citrulline + L-aspartate + ATP = 2-(N(omega)-L-arginino)succinate + AMP + diphosphate + H(+). It functions in the pathway amino-acid biosynthesis; L-arginine biosynthesis; L-arginine from L-ornithine and carbamoyl phosphate: step 2/3. The protein is Argininosuccinate synthase of Bartonella bacilliformis (strain ATCC 35685 / KC583 / Herrer 020/F12,63).